The primary structure comprises 419 residues: DNA ligase (419 aa).

The NTD stretch occupies residues 1-120 (MLNQFPGQLS…ARQKRGAHTN (120 aa)). The AD domain stretch occupies residues 121–317 (RGMIPPMLVK…NYHSPHLAKL (197 aa)). Lys-151 serves as the catalytic N6-AMP-lysine intermediate. Residues 318–419 (KPLLDAEFIL…REPINVLEII (102 aa)) are OB domain.

This sequence belongs to the ATP-dependent DNA ligase family.

It is found in the virion. The catalysed reaction is ATP + (deoxyribonucleotide)n-3'-hydroxyl + 5'-phospho-(deoxyribonucleotide)m = (deoxyribonucleotide)n+m + AMP + diphosphate.. In terms of biological role, very low-fidelity DNA ligase that seals nicks in double-stranded DNA during DNA repair. Together with the viral repair DNA polymerase X, fills the single nucleotide gaps generated by the AP endonuclease. It is not essential for viral replication and recombination. Displays a very low adenylation activity towards DNA with 3'-dideoxy- or 3'-amino-terminated nicks compared to regular nick DNA. The protein is DNA ligase of Ornithodoros (relapsing fever ticks).